We begin with the raw amino-acid sequence, 519 residues long: Probable FAD synthase (519 aa).

Residues 17-108 (AILVIGDEIL…TDQMQFSDEI (92 aa)) are molybdenum cofactor biosynthesis protein-like. Residues 328–485 (QIALSFNGGK…SLGGRDNTVK (158 aa)) form an FAD synthase region.

In the N-terminal section; belongs to the MoaB/Mog family. It in the C-terminal section; belongs to the PAPS reductase family. FAD1 subfamily. The cofactor is Mg(2+).

It catalyses the reaction FMN + ATP + H(+) = FAD + diphosphate. It participates in cofactor biosynthesis; FAD biosynthesis; FAD from FMN: step 1/1. Its function is as follows. Catalyzes the adenylation of flavin mononucleotide (FMN) to form flavin adenine dinucleotide (FAD) coenzyme. The polypeptide is Probable FAD synthase (Caenorhabditis elegans).